The following is a 265-amino-acid chain: Thiamine thiazole synthase (265 aa).

NAD(+) is bound by residues A43, 62–63 (ER), G70, V134, and 162–164 (HVD). Positions 164 and 179 each coordinate Fe cation. NAD(+) is bound at residue M229. Residue R239 coordinates glycine.

The protein belongs to the THI4 family. As to quaternary structure, homooctamer; tetramer of dimers. Fe(2+) serves as cofactor.

The catalysed reaction is hydrogen sulfide + glycine + NAD(+) = ADP-5-ethyl-4-methylthiazole-2-carboxylate + nicotinamide + 3 H2O + H(+). Its pathway is cofactor biosynthesis; thiamine diphosphate biosynthesis. Its function is as follows. Involved in the biosynthesis of the thiazole moiety of thiamine. Catalyzes the conversion of NAD and glycine to adenosine diphosphate 5-(2-hydroxyethyl)-4-methylthiazole-2-carboxylate (ADT), an adenylated thiazole intermediate, using free sulfide as a source of sulfur. The protein is Thiamine thiazole synthase of Sulfolobus acidocaldarius (strain ATCC 33909 / DSM 639 / JCM 8929 / NBRC 15157 / NCIMB 11770).